Here is a 473-residue protein sequence, read N- to C-terminus: C3a anaphylatoxin chemotactic receptor (473 aa).

Residues 1-23 (MESFTADTNSTDLHSRPLFKPQD) lie on the Extracellular side of the membrane. A glycan (N-linked (GlcNAc...) asparagine) is linked at Asn-9. The chain crosses the membrane as a helical span at residues 24–46 (IASMVILSLTCLLGLPGNGLVLW). The Cytoplasmic portion of the chain corresponds to 47-57 (VAGVKMKRTVN). The chain crosses the membrane as a helical span at residues 58-80 (TVWFLHLTLADFLCCLSLPFSVA). At 81–96 (HLILRGHWPYGLFLCK) the chain is on the extracellular side. Residues Cys-95 and Cys-172 are joined by a disulfide bond. A helical membrane pass occupies residues 97-118 (LIPSVIILNMFASVFLLTAISL). Over 119–139 (DRCLMVHKPIWCQNHRSVRTA) the chain is Cytoplasmic. The helical transmembrane segment at 140–160 (FAVCGCVWVVTFVMCIPVFVY) threads the bilayer. Residues 161 to 329 (RDLLVVDDYS…TPQVAITISR (169 aa)) are Extracellular-facing. A sulfotyrosine mark is found at Tyr-174 and Tyr-184. The N-linked (GlcNAc...) asparagine glycan is linked to Asn-201. Residues 233–252 (FHTSPEDPFSQDSASQQPHY) form a disordered region. Tyr-308 carries the sulfotyrosine modification. The helical transmembrane segment at 330–349 (LVVGFLVPFFIMITCYSLIV) threads the bilayer. Residues 350–366 (FRMRKTNLTKSRNKTLR) are Cytoplasmic-facing. Residues 367 to 389 (VAVAVVTVFFVCWIPYHIVGILL) traverse the membrane as a helical segment. Topologically, residues 390 to 406 (VITDQESALREVVLPWD) are extracellular. Residues 407 to 427 (HMSIALASANSCFNPFLYALL) traverse the membrane as a helical segment. Residues 428 to 473 (GKDFRKKARQSVKGILEAAFSEELTHSTSCTQDKAPSKRNHMSTDV) are Cytoplasmic-facing. Position 448 is a phosphoserine (Ser-448). The residue at position 452 (Thr-452) is a Phosphothreonine.

Belongs to the G-protein coupled receptor 1 family. Interacts with VGF-derived peptide TLQP-21.

The protein resides in the cell membrane. In terms of biological role, receptor for the chemotactic and inflammatory peptide anaphylatoxin C3a. This receptor stimulates chemotaxis, granule enzyme release and superoxide anion production. This Rattus norvegicus (Rat) protein is C3a anaphylatoxin chemotactic receptor (C3ar1).